The following is a 264-amino-acid chain: uncharacterized protein (264 aa).

Residues H7, H9, E102, H138, H163, and D213 each contribute to the a divalent metal cation site.

Belongs to the metallo-dependent hydrolases superfamily. TatD-type hydrolase family. A divalent metal cation is required as a cofactor.

This is an uncharacterized protein from Buchnera aphidicola subsp. Acyrthosiphon pisum (strain APS) (Acyrthosiphon pisum symbiotic bacterium).